A 716-amino-acid polypeptide reads, in one-letter code: 1,4-alpha-glucan branching enzyme GlgB (716 aa).

The active-site Nucleophile is the Asp394. Catalysis depends on Glu447, which acts as the Proton donor.

It belongs to the glycosyl hydrolase 13 family. GlgB subfamily. As to quaternary structure, monomer.

It catalyses the reaction Transfers a segment of a (1-&gt;4)-alpha-D-glucan chain to a primary hydroxy group in a similar glucan chain.. It functions in the pathway glycan biosynthesis; glycogen biosynthesis. Functionally, catalyzes the formation of the alpha-1,6-glucosidic linkages in glycogen by scission of a 1,4-alpha-linked oligosaccharide from growing alpha-1,4-glucan chains and the subsequent attachment of the oligosaccharide to the alpha-1,6 position. The sequence is that of 1,4-alpha-glucan branching enzyme GlgB from Photobacterium profundum (strain SS9).